The primary structure comprises 644 residues: Threonine--tRNA ligase (644 aa).

The TGS domain occupies 1–61 (MINVTLPDGS…DGDAQVAIIT (61 aa)). The interval 243–536 (DHRKLGKQME…LIESYAGKLP (294 aa)) is catalytic. Zn(2+) is bound by residues cysteine 336, histidine 387, and histidine 513.

It belongs to the class-II aminoacyl-tRNA synthetase family. As to quaternary structure, homodimer. The cofactor is Zn(2+).

Its subcellular location is the cytoplasm. The enzyme catalyses tRNA(Thr) + L-threonine + ATP = L-threonyl-tRNA(Thr) + AMP + diphosphate + H(+). Its function is as follows. Catalyzes the attachment of threonine to tRNA(Thr) in a two-step reaction: L-threonine is first activated by ATP to form Thr-AMP and then transferred to the acceptor end of tRNA(Thr). Also edits incorrectly charged L-seryl-tRNA(Thr). The sequence is that of Threonine--tRNA ligase from Maricaulis maris (strain MCS10) (Caulobacter maris).